We begin with the raw amino-acid sequence, 256 residues long: Pimeloyl-[acyl-carrier protein] methyl ester esterase (256 aa).

In terms of domain architecture, AB hydrolase-1 spans 15-242 (HLVLLHGWGL…AAHAPFISHP (228 aa)). Substrate contacts are provided by residues W22, 82–83 (SL), and 143–147 (FLALQ). S82 acts as the Nucleophile in catalysis. Active-site residues include D207 and H235. H235 lines the substrate pocket.

The protein belongs to the AB hydrolase superfamily. Carboxylesterase BioH family. As to quaternary structure, monomer.

Its subcellular location is the cytoplasm. The catalysed reaction is 6-carboxyhexanoyl-[ACP] methyl ester + H2O = 6-carboxyhexanoyl-[ACP] + methanol + H(+). It participates in cofactor biosynthesis; biotin biosynthesis. The physiological role of BioH is to remove the methyl group introduced by BioC when the pimeloyl moiety is complete. It allows to synthesize pimeloyl-ACP via the fatty acid synthetic pathway through the hydrolysis of the ester bonds of pimeloyl-ACP esters. In Escherichia coli O127:H6 (strain E2348/69 / EPEC), this protein is Pimeloyl-[acyl-carrier protein] methyl ester esterase.